Consider the following 624-residue polypeptide: Leucine-rich repeat, immunoglobulin-like domain and transmembrane domain-containing protein 1 (624 aa).

The N-terminal stretch at 1–21 (MWVALGMLWLLALGGPHQAWG) is a signal peptide. In terms of domain architecture, LRRNT spans 22 to 59 (FCPSECSCSLRILSDGSKARTVVCSDPDLTLPPASIPP). The Lumenal segment spans residues 22–527 (FCPSECSCSL…EVVDAEGTQR (506 aa)). 5 LRR repeats span residues 60-81 (DTCKLRLERTAIRRVPGETFRP), 84-105 (RLEQLWLPYNALSELSALMLRG), 108-129 (RLRELRLPGNRLVTFPWAALRD), 132-153 (QLQLLDLQANRLSTLPPEAAHF), and 156-177 (NLTFLDLSNNQLMRLPEELLDV). Asn156 carries N-linked (GlcNAc...) asparagine glycosylation. In terms of domain architecture, LRRCT spans 201-254 (NPWVCDCRLYDLVHLLDGWVSSNLIFIEARLRCASPRSLAGVAFSQLELRKCQS). An Ig-like C2-type domain is found at 267–336 (PLGSTVLLRC…YICQAKNFLG (70 aa)). A disulfide bridge connects residues Cys276 and Cys329. N-linked (GlcNAc...) asparagine glycans are attached at residues Asn297 and Asn456. The region spanning 431-519 (MVRSLKVVGD…QCVIFSTDEV (89 aa)) is the Fibronectin type-III domain. The LRR 6 repeat unit spans residues 526 to 549 (QRLINMVVISVAAIIALPPTLLVC). The chain crosses the membrane as a helical span at residues 528 to 548 (LINMVVISVAAIIALPPTLLV). At 549 to 624 (CCGALRRRCH…GGRRINEYFC (76 aa)) the chain is on the cytoplasmic side.

In terms of assembly, may form a homodimer. Interacts with LRIT2; may form a heterodimer with LRIT2. Interacts (via its N-terminal extracellular domain) with metabotropic glutamate receptor GRM6. Interacts (via its extreme C-terminus) with the scaffold protein FRMPD2 (via the third PDZ domain); the interaction leads to their colocalization in photoreceptor synapses. Expressed predominantly in developing photoreceptor and bipolar cells.

Its subcellular location is the endoplasmic reticulum membrane. The protein localises to the cell projection. It localises to the dendrite. Functionally, photoreceptor synaptic protein essential for normal vision. Involved in synapse formation in cone photoreceptor cells. This Mus musculus (Mouse) protein is Leucine-rich repeat, immunoglobulin-like domain and transmembrane domain-containing protein 1 (Lrit1).